The chain runs to 333 residues: 4-hydroxy-3-methylbut-2-enyl diphosphate reductase (333 aa).

Residue cysteine 33 participates in [4Fe-4S] cluster binding. (2E)-4-hydroxy-3-methylbut-2-enyl diphosphate contacts are provided by histidine 62 and histidine 95. Dimethylallyl diphosphate contacts are provided by histidine 62 and histidine 95. 2 residues coordinate isopentenyl diphosphate: histidine 62 and histidine 95. Cysteine 117 contacts [4Fe-4S] cluster. Histidine 145 is a binding site for (2E)-4-hydroxy-3-methylbut-2-enyl diphosphate. Dimethylallyl diphosphate is bound at residue histidine 145. Histidine 145 contacts isopentenyl diphosphate. Catalysis depends on glutamate 147, which acts as the Proton donor. Residue threonine 186 coordinates (2E)-4-hydroxy-3-methylbut-2-enyl diphosphate. Cysteine 216 contributes to the [4Fe-4S] cluster binding site. (2E)-4-hydroxy-3-methylbut-2-enyl diphosphate is bound by residues serine 244, serine 245, asparagine 246, and serine 289. Dimethylallyl diphosphate is bound by residues serine 244, serine 245, asparagine 246, and serine 289. Isopentenyl diphosphate-binding residues include serine 244, serine 245, asparagine 246, and serine 289.

Belongs to the IspH family. Requires [4Fe-4S] cluster as cofactor.

The enzyme catalyses isopentenyl diphosphate + 2 oxidized [2Fe-2S]-[ferredoxin] + H2O = (2E)-4-hydroxy-3-methylbut-2-enyl diphosphate + 2 reduced [2Fe-2S]-[ferredoxin] + 2 H(+). The catalysed reaction is dimethylallyl diphosphate + 2 oxidized [2Fe-2S]-[ferredoxin] + H2O = (2E)-4-hydroxy-3-methylbut-2-enyl diphosphate + 2 reduced [2Fe-2S]-[ferredoxin] + 2 H(+). The protein operates within isoprenoid biosynthesis; dimethylallyl diphosphate biosynthesis; dimethylallyl diphosphate from (2E)-4-hydroxy-3-methylbutenyl diphosphate: step 1/1. Its pathway is isoprenoid biosynthesis; isopentenyl diphosphate biosynthesis via DXP pathway; isopentenyl diphosphate from 1-deoxy-D-xylulose 5-phosphate: step 6/6. Catalyzes the conversion of 1-hydroxy-2-methyl-2-(E)-butenyl 4-diphosphate (HMBPP) into a mixture of isopentenyl diphosphate (IPP) and dimethylallyl diphosphate (DMAPP). Acts in the terminal step of the DOXP/MEP pathway for isoprenoid precursor biosynthesis. This Corynebacterium diphtheriae (strain ATCC 700971 / NCTC 13129 / Biotype gravis) protein is 4-hydroxy-3-methylbut-2-enyl diphosphate reductase.